We begin with the raw amino-acid sequence, 63 residues long: ATP synthase F(0) complex subunit 8 (63 aa).

The helical transmembrane segment at 8–24 (TWLLTILSMLLTLFVLF) threads the bilayer. Lys-57 bears the N6-acetyllysine mark.

It belongs to the ATPase protein 8 family. In terms of assembly, component of the ATP synthase complex composed at least of ATP5F1A/subunit alpha, ATP5F1B/subunit beta, ATP5MC1/subunit c (homooctomer), MT-ATP6/subunit a, MT-ATP8/subunit 8, ATP5ME/subunit e, ATP5MF/subunit f, ATP5MG/subunit g, ATP5MK/subunit k, ATP5MJ/subunit j, ATP5F1C/subunit gamma, ATP5F1D/subunit delta, ATP5F1E/subunit epsilon, ATP5PF/subunit F6, ATP5PB/subunit b, ATP5PD/subunit d, ATP5PO/subunit OSCP. ATP synthase complex consists of a soluble F(1) head domain (subunits alpha(3) and beta(3)) - the catalytic core - and a membrane F(0) domain - the membrane proton channel (subunits c, a, 8, e, f, g, k and j). These two domains are linked by a central stalk (subunits gamma, delta, and epsilon) rotating inside the F1 region and a stationary peripheral stalk (subunits F6, b, d, and OSCP). Interacts with PRICKLE3.

The protein resides in the mitochondrion membrane. Functionally, subunit 8, of the mitochondrial membrane ATP synthase complex (F(1)F(0) ATP synthase or Complex V) that produces ATP from ADP in the presence of a proton gradient across the membrane which is generated by electron transport complexes of the respiratory chain. ATP synthase complex consist of a soluble F(1) head domain - the catalytic core - and a membrane F(1) domain - the membrane proton channel. These two domains are linked by a central stalk rotating inside the F(1) region and a stationary peripheral stalk. During catalysis, ATP synthesis in the catalytic domain of F(1) is coupled via a rotary mechanism of the central stalk subunits to proton translocation. In vivo, can only synthesize ATP although its ATP hydrolase activity can be activated artificially in vitro. Part of the complex F(0) domain. This chain is ATP synthase F(0) complex subunit 8, found in Balaenoptera musculus (Blue whale).